A 185-amino-acid polypeptide reads, in one-letter code: Elongation factor P (185 aa).

It belongs to the elongation factor P family.

It is found in the cytoplasm. It functions in the pathway protein biosynthesis; polypeptide chain elongation. In terms of biological role, involved in peptide bond synthesis. Stimulates efficient translation and peptide-bond synthesis on native or reconstituted 70S ribosomes in vitro. Probably functions indirectly by altering the affinity of the ribosome for aminoacyl-tRNA, thus increasing their reactivity as acceptors for peptidyl transferase. In Syntrophomonas wolfei subsp. wolfei (strain DSM 2245B / Goettingen), this protein is Elongation factor P.